The chain runs to 475 residues: Putative response regulator NtrX-like (475 aa).

In terms of domain architecture, Response regulatory spans 5–121 (DVLILDDEES…KLIILLKRAC (117 aa)). D54 is subject to 4-aspartylphosphate. The region spanning 143-369 (LVGGCSVTLK…LRNVVEWTLI (227 aa)) is the Sigma-54 factor interaction domain. Residues 171–178 (GKVGSGKE) and 232–241 (ANNGTLYIDE) contribute to the ATP site.

Its function is as follows. Member of the two-component regulatory system RT0550/RT0603. The chain is Putative response regulator NtrX-like from Rickettsia typhi (strain ATCC VR-144 / Wilmington).